Here is a 404-residue protein sequence, read N- to C-terminus: 5-azacytidine-induced protein 2 (404 aa).

The homodimerization stretch occupies residues 1–198 (MDTLVEDDIC…TELQKARQTG (198 aa)). Residues 40 to 198 (ALVTAYEDIK…TELQKARQTG (159 aa)) adopt a coiled-coil conformation. Residues 229–269 (SDHMQHAYWELRREMANLHLVTRVQAELLRQLKTAAAGKAC) are interaction with TBK1 and IKBKE. Ser-330 bears the Phosphoserine mark. Disordered stretches follow at residues 332–351 (TDNERLTPNDGADFQEHNSY) and 356–390 (LEDNSWVFPSPPKSSETAFGESKSKILPSPNLPPL). Ser-365 is modified (phosphoserine).

In terms of assembly, homodimer. Interacts with IKBKE, TBK1 and TICAM1. Interacts with TAX1BP1. Interacts with CALCOCO2. Post-translationally, ubiquitinated via 'Lys-48'-linked polyubiquitination by TRIM38, leading to its degradation.

Its subcellular location is the cytoplasm. In terms of biological role, adapter protein which binds TBK1 and IKBKE playing a role in antiviral innate immunity. Activates serine/threonine-protein kinase TBK1 and facilitates its oligomerization. Enhances the phosphorylation of NF-kappa-B p65 subunit RELA by TBK1. Promotes TBK1-induced as well as TNF-alpha or PMA-induced activation of NF-kappa-B. Participates in IFNB promoter activation via TICAM1. The polypeptide is 5-azacytidine-induced protein 2 (Azi2) (Rattus norvegicus (Rat)).